We begin with the raw amino-acid sequence, 530 residues long: G2/mitotic-specific cyclin-B (530 aa).

Positions 76 to 152 (ARVDSHWKKQ…EPTLKREDSN (77 aa)) are disordered. Positions 121–144 (PTKTTVEPTKVTVKSSSSENVNEP) are enriched in low complexity. Ser137 carries the post-translational modification Phosphoserine.

The protein belongs to the cyclin family. Cyclin AB subfamily. As to quaternary structure, interacts with the protein kinase Cdk1 to form a serine/threonine kinase holoenzyme complex also known as maturation promoting factor (MPF). The cyclin subunit imparts substrate specificity to the complex.

Its function is as follows. Essential for the control of the cell cycle at the G2/M (mitosis) transition. This chain is G2/mitotic-specific cyclin-B (CycB), found in Drosophila melanogaster (Fruit fly).